Reading from the N-terminus, the 506-residue chain is MPRRPPFWLTLLIILIGLPLCLPFLYVILRATEVGLTRSVELLFRPRMAELLSNTMLLMVCVTIGAISLGTFCAFLLERYRFFGKAFFEVAMTLPLCIPAFVSGFTWISLTFRVEVFWGTIGIMTLSSFPLAYLPVSAILKRLDRSLEEVSLSLGKSPVYTFWYAISPQLKPAIGSSILLIALHMLVEFGAVSILNYQTFTTAIFQEYEMSFNNSTAALLSAVLMAICILIVFGEIFFRGKQTLYHSGKGVTRPYLVKTLSFGKQCLTFGFFSSIFILSIGVPVIMLIYWLIVGTSLESAGDFSEFLSAFSNSFIISGLGALLTVMCALPLVWAAVRYRSYLTIWIDRLPYLLHAVPGLVIALSLVYFSIHYANDLYQTFFVIIIAYFMLYLPMAQTTLRASLEQLSDQIEKVGQSLGRNPFYIFRTLTLPAILPGVAAAFALVFLNLMKELTATLLLTSNDIKTLSIAVWEHTSDAQYAAATPYALMLVLFSGIPVFLLKKYAFK.

Transmembrane regions (helical) follow at residues 9 to 29 (LTLL…YVIL), 57 to 77 (LLMV…AFLL), 90 to 110 (VAMT…WISL), 116 to 136 (VFWG…YLPV), 174 to 194 (IGSS…AVSI), 218 to 238 (ALLS…EIFF), 275 to 295 (IFIL…IVGT), 314 to 334 (FIIS…LVWA), 350 to 370 (PYLL…YFSI), 379 to 399 (TFFV…QTTL), 428 to 448 (LTLP…FLNL), and 480 to 500 (AAAT…VFLL). Positions 52–233 (LSNTMLLMVC…LMAICILIVF (182 aa)) constitute an ABC transmembrane type-1 1 domain. One can recognise an ABC transmembrane type-1 2 domain in the interval 310-500 (FSNSFIISGL…LFSGIPVFLL (191 aa)).

It belongs to the binding-protein-dependent transport system permease family. FbpB subfamily. The complex is composed of two ATP-binding proteins (FbpC), two transmembrane proteins (FbpB) and a solute-binding protein (FbpA).

Its subcellular location is the cell inner membrane. Functionally, part of the ABC transporter complex FbpABC (TC 3.A.1.10.1) involved in Fe(3+) ions import. Probably responsible for the translocation of the substrate across the membrane. This chain is Fe(3+)-transport system permease protein FbpB 2 (fbpB2), found in Haemophilus influenzae (strain ATCC 51907 / DSM 11121 / KW20 / Rd).